The following is a 150-amino-acid chain: UPF0756 membrane protein HDEF_0364 (150 aa).

Transmembrane regions (helical) follow at residues 1-21, 28-48, 51-71, 88-108, and 123-143; these read MMFF…GLIS, ISVV…FPWV, YALK…IASG, ILGI…VSLM, and ILGV…AGLL.

This sequence belongs to the UPF0756 family.

It localises to the cell membrane. This chain is UPF0756 membrane protein HDEF_0364, found in Hamiltonella defensa subsp. Acyrthosiphon pisum (strain 5AT).